A 385-amino-acid chain; its full sequence is m7GpppN-mRNA hydrolase (385 aa).

Positions 95-226 (MGVPTYGAII…KLGLAPNKFF (132 aa)) constitute a Nudix hydrolase domain. The Nudix box signature appears at 129–150 (GKVNKEEAPHDCAAREVFEETG). Mn(2+) contacts are provided by E144 and E148. S246, S247, S249, S276, and S284 each carry phosphoserine. Residues 247-266 (SDSDNGFSSTGSTPAKPTVE) form a disordered region. Residues 249–259 (SDNGFSSTGST) show a composition bias toward low complexity.

The protein belongs to the Nudix hydrolase family. DCP2 subfamily. As to quaternary structure, found in a mRNA decay complex with LSM1, LSM3, LSM4, EXOSC2, EXOSC4, EXOSC10, PARN, XRN1, CNOT6, UPF1, UPF2 and UPF3B. Forms a complex with DCP1A, EDC3, DDX6 and EDC4/HEDLS, within this complex directly interacts with EDC4/HEDLS. Interacts with DPC1B, UPF1, UPF2 and UPF3B. Associates with polysomes. Interacts (via N-terminus and C-terminus) with TRIM21 (via N-terminus and C-terminus). Interacts with LIMD1, WTIP and AJUBA. Interacts with DDX17 in an RNA-dependent manner. Interacts with ZC3HAV1. Interacts with APOBEC3G in an RNA-dependent manner. Interacts with ZFP36L1 (via N-terminus). Interacts with NBDY. Mn(2+) is required as a cofactor. Requires Mg(2+) as cofactor.

Its subcellular location is the cytoplasm. It is found in the P-body. The protein localises to the nucleus. The enzyme catalyses a 5'-end (N(7)-methyl 5'-triphosphoguanosine)-ribonucleoside in mRNA + H2O = N(7)-methyl-GDP + a 5'-end phospho-ribonucleoside in mRNA + 2 H(+). Decapping metalloenzyme that catalyzes the cleavage of the cap structure on mRNAs. Removes the 7-methyl guanine cap structure from mRNA molecules, yielding a 5'-phosphorylated mRNA fragment and 7m-GDP. Necessary for the degradation of mRNAs, both in normal mRNA turnover and in nonsense-mediated mRNA decay. Plays a role in replication-dependent histone mRNA degradation. Has higher activity towards mRNAs that lack a poly(A) tail. Has no activity towards a cap structure lacking an RNA moiety. The presence of a N(6)-methyladenosine methylation at the second transcribed position of mRNAs (N(6),2'-O-dimethyladenosine cap; m6A(m)) provides resistance to DCP2-mediated decapping. Blocks autophagy in nutrient-rich conditions by repressing the expression of ATG-related genes through degradation of their transcripts. This Pongo abelii (Sumatran orangutan) protein is m7GpppN-mRNA hydrolase (DCP2).